The chain runs to 1111 residues: Zinc finger protein GLI1 (1111 aa).

The segment at 52 to 78 is disordered; it reads GYGAARETSSCTEGSLFPPPPPPRSSV. Residues 123–127 are interaction with SUFU; that stretch reads SYGHL. 5 C2H2-type zinc fingers span residues 238-263, 271-298, 304-328, 334-359, and 365-390; these read TDCRWDGCSQEFDSQEQLVHHINSEH, FVCHWGGCSRELRPFKAQYMLVVHMRRH, HKCTFEGCRKSYSRLENLKTHLRSH, YMCEQEGCSKAFSNASDRAKHQNRTH, and YVCKLPGCTKRYTDPSSLRKHVKTVH. Residues 286–294 are interaction with DNA; it reads KAQYMLVVH. Interaction with DNA regions lie at residues 348–353 and 378–384; these read ASDRAK and DPSSLRK. Residues 378–487 are disordered; it reads DPSSLRKHVK…EDLSSLDEGP (110 aa). Residues 416 to 431 show a composition bias toward basic and acidic residues; that stretch reads EPKREREGGSGREESR. Positions 439-465 are enriched in polar residues; it reads MPQQSPGAQSSCSSDHSPAGSAANTDS. N6-acetyllysine is present on Lys520. Disordered regions lie at residues 528–583, 598–649, 673–692, and 832–891; these read GAPV…LPGL, ARGS…RAAD, TGRNFDPHHPTSVYSPQPPS, and PCLN…SSHS. Residues 546–562 are compositionally biased toward low complexity; it reads SSSSSMSSAYTVSRRSS. Over residues 640–649 the composition is skewed to basic and acidic residues; it reads RASDPARAAD. Residues 855 to 870 show a composition bias toward pro residues; that stretch reads LPQPQYPQSGPYPQPP. A Glycyl lysine isopeptide (Lys-Gly) (interchain with G-Cter in SUMO2) cross-link involves residue Lys1008. The tract at residues 1064–1093 is disordered; that stretch reads LSPPLSHEQGDSSKNTPSPSGPPNMAVGNM.

It belongs to the GLI C2H2-type zinc-finger protein family. In terms of assembly, interacts with KIF7. Interacts with STK36. Interacts with ZIC1; the interaction enhances transcription activation. Interacts with SUFU; this inhibits transcriptional activation by GLI1. Post-translationally, phosphorylated in vitro by ULK3. In terms of processing, acetylation at Lys-520 down-regulates transcriptional activity. Deacetylated by HDAC1. Ubiquitinated by the CRL2(FEM1B) complex, suppressing GLI1 transcriptional activator activity.

The protein localises to the cytoplasm. It localises to the nucleus. In terms of biological role, acts as a transcriptional activator. Binds to the DNA consensus sequence 5'-GACCACCCA-3'. Regulates the transcription of specific genes during normal development. Plays a role in craniofacial development and digital development, as well as development of the central nervous system and gastrointestinal tract. Mediates SHH signaling. Plays a role in cell proliferation and differentiation via its role in SHH signaling. This chain is Zinc finger protein GLI1 (Gli1), found in Mus musculus (Mouse).